The primary structure comprises 248 residues: Type III pantothenate kinase (248 aa).

6 to 13 is an ATP binding site; it reads DCGNSFIK. Residues tyrosine 92 and 99–102 contribute to the substrate site; that span reads GLDR. Residue aspartate 101 is the Proton acceptor of the active site. A K(+)-binding site is contributed by aspartate 121. Threonine 124 contacts ATP. Position 180 (threonine 180) interacts with substrate.

The protein belongs to the type III pantothenate kinase family. Homodimer. NH4(+) serves as cofactor. K(+) is required as a cofactor.

It localises to the cytoplasm. It carries out the reaction (R)-pantothenate + ATP = (R)-4'-phosphopantothenate + ADP + H(+). It participates in cofactor biosynthesis; coenzyme A biosynthesis; CoA from (R)-pantothenate: step 1/5. Catalyzes the phosphorylation of pantothenate (Pan), the first step in CoA biosynthesis. This chain is Type III pantothenate kinase, found in Ectopseudomonas mendocina (strain ymp) (Pseudomonas mendocina).